We begin with the raw amino-acid sequence, 563 residues long: MAFNDLLQQVGGVGRFQQIQVTLVVLPLLLMASHNTLQNFTAAIPTHHCRPPADANLSKNGGLEVWLPRDRQGQPESCLRFTSPQWGLPFLNGTEANGTGATEPCTDGWIYDNSTFPSTIVTEWDLVCSHRALRQLAQSLYMVGVLLGAMVFGYLADRLGRRKVLILNYLQTAVSGTCAAFAPNFPIYCAFRLLSGMALAGISLNCMTLNVEWMPIHTRACVGTLIGYVYSLGQFLLAGVAYAVPHWRHLQLLVSAPFFAFFIYSWFFIESARWHSSSGRLDLTLRALQRVARINGKREEGAKLSMEVLRASLQKELTMGKGQASAMELLRCPTLRHLFLCLSMLWFATSFAYYGLVMDLQGFGVSIYLIQVIFGAVDLPAKLVGFLVINSLGRRPAQMAALLLAGICILLNGVIPQDQSIVRTSLAVLGKGCLAASFNCIFLYTGELYPTMIRQTGMGMGSTMARVGSIVSPLVSMTAELYPSMPLFIYGAVPVAASAVTVLLPETLGQPLPDTVQDLESRWAPTQKEAGIYPRKGKQTRQQQEHQKYMVPLQASAQEKNGL.

Topologically, residues 1–9 (MAFNDLLQQ) are cytoplasmic. The helical transmembrane segment at 10–30 (VGGVGRFQQIQVTLVVLPLLL) threads the bilayer. Over 31–135 (MASHNTLQNF…LVCSHRALRQ (105 aa)) the chain is Extracellular. N-linked (GlcNAc...) asparagine glycans are attached at residues asparagine 39, asparagine 56, asparagine 92, asparagine 97, and asparagine 113. Residues 136 to 156 (LAQSLYMVGVLLGAMVFGYLA) form a helical membrane-spanning segment. At 157–164 (DRLGRRKV) the chain is on the cytoplasmic side. A helical transmembrane segment spans residues 165–187 (LILNYLQTAVSGTCAAFAPNFPI). Topologically, residues 188-190 (YCA) are extracellular. The chain crosses the membrane as a helical span at residues 191 to 213 (FRLLSGMALAGISLNCMTLNVEW). The Cytoplasmic segment spans residues 214–224 (MPIHTRACVGT). The chain crosses the membrane as a helical span at residues 225-245 (LIGYVYSLGQFLLAGVAYAVP). At 246 to 248 (HWR) the chain is on the extracellular side. The chain crosses the membrane as a helical span at residues 249 to 269 (HLQLLVSAPFFAFFIYSWFFI). Residues 270–337 (ESARWHSSSG…ELLRCPTLRH (68 aa)) lie on the Cytoplasmic side of the membrane. Residues 338–358 (LFLCLSMLWFATSFAYYGLVM) traverse the membrane as a helical segment. At 359–368 (DLQGFGVSIY) the chain is on the extracellular side. A helical transmembrane segment spans residues 369-389 (LIQVIFGAVDLPAKLVGFLVI). Residues 390–395 (NSLGRR) are Cytoplasmic-facing. A helical membrane pass occupies residues 396–416 (PAQMAALLLAGICILLNGVIP). Topologically, residues 417-425 (QDQSIVRTS) are extracellular. Residues 426-446 (LAVLGKGCLAASFNCIFLYTG) traverse the membrane as a helical segment. The Cytoplasmic portion of the chain corresponds to 447-455 (ELYPTMIRQ). The helical transmembrane segment at 456-475 (TGMGMGSTMARVGSIVSPLV) threads the bilayer. Topologically, residues 476 to 484 (SMTAELYPS) are extracellular. Residues 485–505 (MPLFIYGAVPVAASAVTVLLP) form a helical membrane-spanning segment. Topologically, residues 506–563 (ETLGQPLPDTVQDLESRWAPTQKEAGIYPRKGKQTRQQQEHQKYMVPLQASAQEKNGL) are cytoplasmic. Positions 525-563 (PTQKEAGIYPRKGKQTRQQQEHQKYMVPLQASAQEKNGL) are disordered.

It belongs to the major facilitator (TC 2.A.1) superfamily. Organic cation transporter (TC 2.A.1.19) family. Post-translationally, glycosylated. Glycosylation at Asn-113 may occur at a secondary level. Glycosylation is necessary for proper targeting of the transporter to the plasma membrane. In terms of tissue distribution, strongly expressed in kidney. Expressed at lower level in liver, skeletal muscle, brain and placenta. In kidney, found at the basolateral membrane of the proximal tubule. In testis, primarily localized to the basal membrane of Sertoli cells and weakly expressed in Leydig cells and vascular endothelial cells.

It localises to the basolateral cell membrane. The protein localises to the basal cell membrane. The catalysed reaction is (6R)-L-erythro-5,6,7,8-tetrahydrobiopterin(out) + a dicarboxylate(in) = (6R)-L-erythro-5,6,7,8-tetrahydrobiopterin(in) + a dicarboxylate(out). It carries out the reaction L-erythro-7,8-dihydrobiopterin(out) + a dicarboxylate(in) = L-erythro-7,8-dihydrobiopterin(in) + a dicarboxylate(out). The enzyme catalyses L-sepiapterin(out) + a dicarboxylate(in) = L-sepiapterin(in) + a dicarboxylate(out). It catalyses the reaction prostaglandin F2alpha(out) + a dicarboxylate(in) = prostaglandin F2alpha(in) + a dicarboxylate(out). The catalysed reaction is prostaglandin E2(out) + a dicarboxylate(in) = prostaglandin E2(in) + a dicarboxylate(out). It carries out the reaction 3',5'-cyclic AMP(out) + a dicarboxylate(in) = 3',5'-cyclic AMP(in) + a dicarboxylate(out). The enzyme catalyses 3',5'-cyclic GMP(out) + a dicarboxylate(in) = 3',5'-cyclic GMP(in) + a dicarboxylate(out). It catalyses the reaction urate(out) + a dicarboxylate(in) = urate(in) + a dicarboxylate(out). The catalysed reaction is kynurenate(out) + glutarate(in) = kynurenate(in) + glutarate(out). It carries out the reaction (indol-3-yl)acetate(out) + a dicarboxylate(in) = (indol-3-yl)acetate(in) + a dicarboxylate(out). The enzyme catalyses indoxyl sulfate(out) + a dicarboxylate(in) = indoxyl sulfate(in) + a dicarboxylate(out). It catalyses the reaction N-benzoylglycine(out) + a dicarboxylate(in) = N-benzoylglycine(in) + a dicarboxylate(out). The catalysed reaction is 3-carboxy-4-methyl-5-propyl-2-furanpropanoate(out) + a dicarboxylate(in) = 3-carboxy-4-methyl-5-propyl-2-furanpropanoate(in) + a dicarboxylate(out). In terms of biological role, secondary active transporter that functions as a Na(+)-independent organic anion (OA)/dicarboxylate antiporter where the uptake of one molecule of OA into the cell is coupled with an efflux of one molecule of intracellular dicarboxylate such as 2-oxoglutarate or glutarate. Mediates the uptake of OA across the basolateral side of proximal tubule epithelial cells, thereby contributing to the renal elimination of endogenous OA from the systemic circulation into the urine. Functions as a biopterin transporters involved in the uptake and the secretion of coenzymes tetrahydrobiopterin (BH4), dihydrobiopterin (BH2) and sepiapterin to urine, thereby determining baseline levels of blood biopterins. Transports prostaglandin E2 (PGE2) and prostaglandin F2-alpha (PGF2-alpha) and may contribute to their renal excretion. Also mediates the uptake of cyclic nucleotides such as cAMP and cGMP. Involved in the transport of neuroactive tryptophan metabolites kynurenate (KYNA) and xanthurenate (XA) and may contribute to their secretion from the brain. May transport glutamate. Also involved in the disposition of uremic toxins and potentially toxic xenobiotics by the renal organic anion secretory pathway, helping reduce their undesired toxicological effects on the body. Uremic toxins include the indoxyl sulfate (IS), hippurate/N-benzoylglycine (HA), indole acetate (IA), 3-carboxy-4- methyl-5-propyl-2-furanpropionate (CMPF) and urate. Xenobiotics include the mycotoxin ochratoxin (OTA). May also contribute to the transport of organic compounds in testes across the blood-testis-barrier. The protein is Solute carrier family 22 member 6 of Homo sapiens (Human).